The sequence spans 254 residues: MDEHSIMQAVAVARGARNIEVFTGAGMSADSGLETYRDPETGVWSKVDPQAMASIDAWARDPEPMWAWYRWRAGQAMKARPNAGHETIAYWEGSHLVDAVHVTTQNIDNLHERAGSTEVTHLHGSLFEFRCSICSKPWRDDGDYPREPVERLAPPTCSLCGNPVRPGVVWFGEALPQEEWAVAERRMREADLVVIVGTSGIVYPAASLPVLAHQRGVPILEITPKETDLSRIATYSWRATAAEGLPALVRRLGV.

The region spanning 1 to 254 (MDEHSIMQAV…LPALVRRLGV (254 aa)) is the Deacetylase sirtuin-type domain. NAD(+) is bound at residue 24 to 44 (GAGMSADSGLETYRDPETGVW). Substrate is bound by residues Y69 and R72. 105-108 (QNID) contributes to the NAD(+) binding site. H123 serves as the catalytic Proton acceptor. Residues C131, C134, C157, and C160 each contribute to the Zn(2+) site. Residues 197–199 (GTS) and A241 each bind NAD(+).

This sequence belongs to the sirtuin family. Class III subfamily. Requires Zn(2+) as cofactor.

It localises to the cytoplasm. The enzyme catalyses N(6)-acetyl-L-lysyl-[protein] + NAD(+) + H2O = 2''-O-acetyl-ADP-D-ribose + nicotinamide + L-lysyl-[protein]. It catalyses the reaction N(6)-succinyl-L-lysyl-[protein] + NAD(+) + H2O = 2''-O-succinyl-ADP-D-ribose + nicotinamide + L-lysyl-[protein]. Its function is as follows. NAD-dependent lysine deacetylase and desuccinylase that specifically removes acetyl and succinyl groups on target proteins. Modulates the activities of several proteins which are inactive in their acylated form. This chain is NAD-dependent protein deacylase 2, found in Corynebacterium efficiens (strain DSM 44549 / YS-314 / AJ 12310 / JCM 11189 / NBRC 100395).